Reading from the N-terminus, the 179-residue chain is ATP synthase subunit delta 1 (179 aa).

The protein belongs to the ATPase delta chain family. In terms of assembly, F-type ATPases have 2 components, F(1) - the catalytic core - and F(0) - the membrane proton channel. F(1) has five subunits: alpha(3), beta(3), gamma(1), delta(1), epsilon(1). F(0) has three main subunits: a(1), b(2) and c(10-14). The alpha and beta chains form an alternating ring which encloses part of the gamma chain. F(1) is attached to F(0) by a central stalk formed by the gamma and epsilon chains, while a peripheral stalk is formed by the delta and b chains.

The protein localises to the cell inner membrane. Its function is as follows. F(1)F(0) ATP synthase produces ATP from ADP in the presence of a proton or sodium gradient. F-type ATPases consist of two structural domains, F(1) containing the extramembraneous catalytic core and F(0) containing the membrane proton channel, linked together by a central stalk and a peripheral stalk. During catalysis, ATP synthesis in the catalytic domain of F(1) is coupled via a rotary mechanism of the central stalk subunits to proton translocation. This protein is part of the stalk that links CF(0) to CF(1). It either transmits conformational changes from CF(0) to CF(1) or is implicated in proton conduction. The sequence is that of ATP synthase subunit delta 1 from Syntrophotalea carbinolica (strain DSM 2380 / NBRC 103641 / GraBd1) (Pelobacter carbinolicus).